The following is a 341-amino-acid chain: Phenylalanine--tRNA ligase alpha subunit (341 aa).

E256 contacts Mg(2+).

This sequence belongs to the class-II aminoacyl-tRNA synthetase family. Phe-tRNA synthetase alpha subunit type 1 subfamily. In terms of assembly, tetramer of two alpha and two beta subunits. It depends on Mg(2+) as a cofactor.

The protein resides in the cytoplasm. The enzyme catalyses tRNA(Phe) + L-phenylalanine + ATP = L-phenylalanyl-tRNA(Phe) + AMP + diphosphate + H(+). This chain is Phenylalanine--tRNA ligase alpha subunit, found in Leptospira borgpetersenii serovar Hardjo-bovis (strain JB197).